Here is a 402-residue protein sequence, read N- to C-terminus: Zinc finger protein 322 (402 aa).

The C2H2-type 1; atypical zinc finger occupies 43-65 (YQCLECKQNFCENLALIMCERTH). 8 consecutive C2H2-type zinc fingers follow at residues 71–93 (YKCD…QRIH), 99–121 (YKCS…QRTH), 127–149 (YTCD…QRSH), 155–177 (YLCS…RRTH), 183–205 (FKCL…QRTH), 211–233 (YKCN…KRVH), 239–261 (YKCG…QRVH), and 267–289 (YKCL…QATH). The segment at 293-315 (FKCLEYEKSFNCSSDLIVHQRIH) adopts a C2H2-type 10; degenerate zinc-finger fold. The C2H2-type 11; degenerate zinc-finger motif lies at 351–373 (YKYTVCDKSFHQSSALLQHQTVH). Serine 391 is subject to Phosphoserine.

Belongs to the krueppel C2H2-type zinc-finger protein family. As to quaternary structure, interacts with POU5F1.

The protein localises to the cytoplasm. It is found in the nucleus. Its function is as follows. Transcriptional activator. Important for maintenance of pluripotency in embryonic stem cells. Binds directly to the POU5F1 distal enhancer and the NANOG proximal promoter, and enhances expression of both genes. Can also bind to numerous other gene promoters and regulates expression of many other pluripotency factors, either directly or indirectly. Promotes inhibition of MAPK signaling during embryonic stem cell differentiation. In Macaca fascicularis (Crab-eating macaque), this protein is Zinc finger protein 322 (ZNF322).